The chain runs to 315 residues: Putative serine/threonine-protein phosphatase PP2A-4 catalytic subunit (315 aa).

Aspartate 63, histidine 65, aspartate 91, and asparagine 123 together coordinate Mn(2+). Catalysis depends on histidine 124, which acts as the Proton donor. Mn(2+)-binding residues include histidine 173 and histidine 247.

The protein belongs to the PPP phosphatase family. PP-2A subfamily. The cofactor is Mn(2+).

It localises to the cytoplasm. It carries out the reaction O-phospho-L-seryl-[protein] + H2O = L-seryl-[protein] + phosphate. It catalyses the reaction O-phospho-L-threonyl-[protein] + H2O = L-threonyl-[protein] + phosphate. This chain is Putative serine/threonine-protein phosphatase PP2A-4 catalytic subunit (PP2A4), found in Oryza sativa subsp. indica (Rice).